The sequence spans 658 residues: Protein teflon (658 aa).

The segment at 33-56 (LYCHFCRDLFTQLPEFLRHLQSNH) adopts a C2H2-type 1 zinc-finger fold. The segment at 80–131 (DKAHEDAQSAGHNSSSGDSRSLMNSEDSRAIDGSEENSDNSPVKPEQIGKQN) is disordered. The segment covering 89–104 (AGHNSSSGDSRSLMNS) has biased composition (polar residues). C2H2-type zinc fingers lie at residues 608–630 (YFCK…LISH) and 634–657 (FQCT…RNAH).

It belongs to the Teflon family.

The protein resides in the nucleus. The protein localises to the chromosome. Its function is as follows. Specifically required in males for proper segregation of autosomal bivalents at meiosis I. Expression is required in the male germ line prior to spermatocyte stage S4. May have a role as a bridging molecule maintaining adhesion to hold autosome bivalents together via heterochromatic connections. In Drosophila simulans (Fruit fly), this protein is Protein teflon.